A 127-amino-acid polypeptide reads, in one-letter code: Aspartate 1-decarboxylase (127 aa).

The active-site Schiff-base intermediate with substrate; via pyruvic acid is serine 25. The residue at position 25 (serine 25) is a Pyruvic acid (Ser). Threonine 57 serves as a coordination point for substrate. The Proton donor role is filled by tyrosine 58. 73-75 (GAA) contacts substrate.

Belongs to the PanD family. As to quaternary structure, heterooctamer of four alpha and four beta subunits. It depends on pyruvate as a cofactor. Is synthesized initially as an inactive proenzyme, which is activated by self-cleavage at a specific serine bond to produce a beta-subunit with a hydroxyl group at its C-terminus and an alpha-subunit with a pyruvoyl group at its N-terminus.

The protein localises to the cytoplasm. The catalysed reaction is L-aspartate + H(+) = beta-alanine + CO2. It participates in cofactor biosynthesis; (R)-pantothenate biosynthesis; beta-alanine from L-aspartate: step 1/1. In terms of biological role, catalyzes the pyruvoyl-dependent decarboxylation of aspartate to produce beta-alanine. The protein is Aspartate 1-decarboxylase of Staphylococcus carnosus (strain TM300).